We begin with the raw amino-acid sequence, 214 residues long: UPF0758 protein (214 aa).

The MPN domain occupies valine 92–leucine 214. Zn(2+) contacts are provided by histidine 163, histidine 165, and aspartate 176. The short motif at histidine 163–aspartate 176 is the JAMM motif element.

It belongs to the UPF0758 family.

The chain is UPF0758 protein from Rhodobacter capsulatus (Rhodopseudomonas capsulata).